The primary structure comprises 59 residues: UPF0291 protein CPR_1073 (59 aa).

Positions 1-30 (MNIDELTKRINELHKKHKEEGLSEDEHKER) are disordered.

This sequence belongs to the UPF0291 family.

It is found in the cytoplasm. The sequence is that of UPF0291 protein CPR_1073 from Clostridium perfringens (strain SM101 / Type A).